A 1342-amino-acid polypeptide reads, in one-letter code: DNA-directed RNA polymerase subunit beta (1342 aa).

Lysine 1022 and lysine 1200 each carry N6-acetyllysine.

It belongs to the RNA polymerase beta chain family. As to quaternary structure, the RNAP catalytic core consists of 2 alpha, 1 beta, 1 beta' and 1 omega subunit. When a sigma factor is associated with the core the holoenzyme is formed, which can initiate transcription.

It carries out the reaction RNA(n) + a ribonucleoside 5'-triphosphate = RNA(n+1) + diphosphate. Functionally, DNA-dependent RNA polymerase catalyzes the transcription of DNA into RNA using the four ribonucleoside triphosphates as substrates. This chain is DNA-directed RNA polymerase subunit beta, found in Escherichia coli O81 (strain ED1a).